The sequence spans 456 residues: Transcription factor bHLH62 (456 aa).

Over residues 159–185 (RTNSPFPINNEPPITTNEKMPRVSSSP) the composition is skewed to polar residues. Positions 159–254 (RTNSPFPINN…KTKSIDPYKD (96 aa)) are disordered. A compositionally biased stretch (basic and acidic residues) spans 223–254 (KEIEEKEDSDPKRCKKSEENGDKTKSIDPYKD). The region spanning 264-314 (QATDSHSLAERVRREKISERMKLLQDLVPGCNKVTGKALMLDEIINYVQSL) is the bHLH domain.

As to quaternary structure, homodimer. As to expression, expressed constitutively in roots, leaves, stems, and flowers.

Its subcellular location is the nucleus. In Arabidopsis thaliana (Mouse-ear cress), this protein is Transcription factor bHLH62 (BHLH62).